Reading from the N-terminus, the 101-residue chain is NAD(P)H-quinone oxidoreductase subunit 4L, chloroplastic (101 aa).

Helical transmembrane passes span 2–22 (ILEHVLVLSAYLFLIGLYGLI), 32–52 (MCLELILNAVNMNFVTFSDFF), and 61–81 (IFCIFVIAIAAAEAAIGLAIV).

This sequence belongs to the complex I subunit 4L family. As to quaternary structure, NDH is composed of at least 16 different subunits, 5 of which are encoded in the nucleus.

The protein localises to the plastid. Its subcellular location is the chloroplast thylakoid membrane. It carries out the reaction a plastoquinone + NADH + (n+1) H(+)(in) = a plastoquinol + NAD(+) + n H(+)(out). The enzyme catalyses a plastoquinone + NADPH + (n+1) H(+)(in) = a plastoquinol + NADP(+) + n H(+)(out). NDH shuttles electrons from NAD(P)H:plastoquinone, via FMN and iron-sulfur (Fe-S) centers, to quinones in the photosynthetic chain and possibly in a chloroplast respiratory chain. The immediate electron acceptor for the enzyme in this species is believed to be plastoquinone. Couples the redox reaction to proton translocation, and thus conserves the redox energy in a proton gradient. The polypeptide is NAD(P)H-quinone oxidoreductase subunit 4L, chloroplastic (Arabis hirsuta (Hairy rock-cress)).